A 211-amino-acid chain; its full sequence is Large ribosomal subunit protein uL3 (211 aa).

Belongs to the universal ribosomal protein uL3 family. As to quaternary structure, part of the 50S ribosomal subunit. Forms a cluster with proteins L14 and L19.

One of the primary rRNA binding proteins, it binds directly near the 3'-end of the 23S rRNA, where it nucleates assembly of the 50S subunit. The chain is Large ribosomal subunit protein uL3 from Akkermansia muciniphila (strain ATCC BAA-835 / DSM 22959 / JCM 33894 / BCRC 81048 / CCUG 64013 / CIP 107961 / Muc).